A 504-amino-acid chain; its full sequence is DnaJ homolog subfamily C member 3 (504 aa).

The N-terminal stretch at Met1–Cys31 is a signal peptide. TPR repeat units lie at residues Val37–Asn70, Ile72–Phe104, Thr105–Glu138, Met154–Asp187, Glu189–Asn221, Thr222–His255, Leu268–Ile301, Val306–Asn339, and Val340–Asp373. Cys248 and Cys258 are oxidised to a cystine. Phosphoserine; by FAM20C is present on Ser274. Cys313 and Cys329 are disulfide-bonded. The segment at Gln375–Arg393 is flexible linker. A J domain is found at Asp394–Glu462. Residues Asp451–Ser481 are disordered.

In terms of assembly, interacts with EIF2AK4/GCN2; this interaction occurs under endoplasmic reticulum (ER) stress, hypothermic and amino acid starving stress conditions and inhibits EIF2AK4/GCN2 kinase activity. Interacts with EIF2AK3. Interacts with EIF2AK2. Forms a trimeric complex with DNAJB1 and HSPA8. Interacts with THAP12. As to expression, widely expressed with high level in the pancreas and testis. Also expressed in cell lines with different levels.

It localises to the endoplasmic reticulum. In terms of biological role, involved in the unfolded protein response (UPR) during endoplasmic reticulum (ER) stress. Acts as a negative regulator of the EIF2AK4/GCN2 kinase activity by preventing the phosphorylation of eIF-2-alpha at 'Ser-52' and hence attenuating general protein synthesis under ER stress, hypothermic and amino acid starving stress conditions. Co-chaperone of HSPA8/HSC70, it stimulates its ATPase activity. May inhibit both the autophosphorylation of EIF2AK2/PKR and the ability of EIF2AK2 to catalyze phosphorylation of the EIF2A. May inhibit EIF2AK3/PERK activity. The chain is DnaJ homolog subfamily C member 3 (DNAJC3) from Homo sapiens (Human).